A 694-amino-acid polypeptide reads, in one-letter code: Elongation factor G (694 aa).

The 280-residue stretch at 9 to 288 folds into the tr-type G domain; it reads DAIRNIGIMA…VIVKWLPSPL (280 aa). GTP-binding positions include 18-25, 82-86, and 136-139; these read AHIDAGKT, DTPGH, and NKMD.

The protein belongs to the TRAFAC class translation factor GTPase superfamily. Classic translation factor GTPase family. EF-G/EF-2 subfamily.

It is found in the cytoplasm. Its function is as follows. Catalyzes the GTP-dependent ribosomal translocation step during translation elongation. During this step, the ribosome changes from the pre-translocational (PRE) to the post-translocational (POST) state as the newly formed A-site-bound peptidyl-tRNA and P-site-bound deacylated tRNA move to the P and E sites, respectively. Catalyzes the coordinated movement of the two tRNA molecules, the mRNA and conformational changes in the ribosome. The sequence is that of Elongation factor G from Chlamydia trachomatis serovar A (strain ATCC VR-571B / DSM 19440 / HAR-13).